The primary structure comprises 134 residues: Cell division protein SepF 1 (134 aa).

Belongs to the SepF family. As to quaternary structure, homodimer. Interacts with FtsZ.

Its subcellular location is the cytoplasm. Its function is as follows. Cell division protein that is part of the divisome complex and is recruited early to the Z-ring. Probably stimulates Z-ring formation, perhaps through the cross-linking of FtsZ protofilaments. Its function overlaps with FtsA. The protein is Cell division protein SepF 1 of Streptomyces avermitilis (strain ATCC 31267 / DSM 46492 / JCM 5070 / NBRC 14893 / NCIMB 12804 / NRRL 8165 / MA-4680).